A 974-amino-acid chain; its full sequence is Leucine-rich repeat receptor-like kinase protein SUNN (974 aa).

Positions M1–S20 are cleaved as a signal peptide. N-linked (GlcNAc...) asparagine glycans are attached at residues N75, N104, N123, and N136. LRR repeat units lie at residues L92 to L116, T117 to M141, K143 to L165, M166 to E188, F189 to L213, I238 to L262, E263 to M286, S288 to K309, L310 to L334, P335 to N358, K360 to S382, K383 to C406, K407 to L430, P431 to N454, L456 to L477, R478 to L501, V503 to C525, S527 to L549, K550 to M573, and T574 to V598. Residues N250 and N274 are each glycosylated (N-linked (GlcNAc...) asparagine). 2 N-linked (GlcNAc...) asparagine glycosylation sites follow: N312 and N346. Residues N508 and N513 are each glycosylated (N-linked (GlcNAc...) asparagine). 2 N-linked (GlcNAc...) asparagine glycosylation sites follow: N556 and N585. A helical membrane pass occupies residues V635–M655. The Protein kinase domain maps to L685 to I972. Residues I691–V699 and K713 each bind ATP. The Proton acceptor role is filled by D810.

Belongs to the protein kinase superfamily. Ser/Thr protein kinase family. In terms of tissue distribution, expressed in roots and shoots. Expressed in the vasculature of leaves, petioles, stems and roots.

The protein localises to the cell membrane. It catalyses the reaction L-seryl-[protein] + ATP = O-phospho-L-seryl-[protein] + ADP + H(+). The enzyme catalyses L-threonyl-[protein] + ATP = O-phospho-L-threonyl-[protein] + ADP + H(+). In terms of biological role, LRR receptor kinase involved in the regulation of root growth and root nodule organogenesis. Involved in long distance nodulation signaling events. Involved in the autoregulation of nodulation (AON), a long distance systemic signaling from root to shoot and back again, which allows legumes to limit the number of root nodules formed based on available nitrogen and previous rhizobial colonization. Acts from shoot to root to control AON. Interacts with CLE12 and CLE13 signaling to control nodule numbers. Required for the modulation of shoot-to-root auxin transport in response to altered nitrogen tissue concentrations and in the absence of rhizobia. Shoot-to-root auxin transport influences lateral root density and length. Involved in the regulation of root colonization by arbuscular mycorrhizal (AM) fungi. Interacts with CLE33 and CL53 signaling to repress strigolactone biosynthetic genes and strigolactone content in the roots, and consequently reduces the promotion of further colonization by AM fungi. The polypeptide is Leucine-rich repeat receptor-like kinase protein SUNN (Medicago truncatula (Barrel medic)).